A 192-amino-acid polypeptide reads, in one-letter code: BON1-associated protein 1 (192 aa).

The 119-residue stretch at 1–119 folds into the C2 domain; it reads MIYFGRSIDN…RYSPEGHLNF (119 aa).

As to quaternary structure, interacts with BON1 (via VWA domain), BON2 and BON3. Expressed in roots, leaves, stems and flowers.

The protein resides in the membrane. In terms of biological role, negative regulator of cell death and defense responses. Exhibits calcium-dependent phospholipid binding properties. This Arabidopsis thaliana (Mouse-ear cress) protein is BON1-associated protein 1 (BAP1).